A 236-amino-acid polypeptide reads, in one-letter code: DNA repair and recombination protein RadB (236 aa).

This sequence belongs to the eukaryotic RecA-like protein family. RadB subfamily.

Functionally, involved in DNA repair and in homologous recombination. May regulate the cleavage reactions of the branch-structured DNA. Has a very weak ATPase activity that is not stimulated by DNA. Binds DNA but does not promote DNA strands exchange. The chain is DNA repair and recombination protein RadB from Halobacterium salinarum (strain ATCC 29341 / DSM 671 / R1).